Here is an 857-residue protein sequence, read N- to C-terminus: Facilitated trehalose transporter Tret1-1 (857 aa).

Disordered stretches follow at residues 1–28 and 62–203; these read MSGR…KLKE and DPFL…KATS. Topologically, residues 1–392 are cytoplasmic; it reads MSGRDSRGAG…VYRPTTNPIY (392 aa). Residues 69-81 show a composition bias toward polar residues; the sequence is VSPQRHPQNTVRT. Residues 134 to 143 show a composition bias toward basic and acidic residues; it reads EIREHRDRQQ. Polar residues predominate over residues 171–181; it reads GNSNTNSNKAA. Phosphoserine is present on residues Ser248, Ser249, Ser250, Ser320, and Ser322. Residues 327–346 are disordered; sequence LTSRQHFQQQRSISTDSRKS. Residues 330–341 are compositionally biased toward polar residues; it reads RQHFQQQRSIST. A helical membrane pass occupies residues 393–413; the sequence is IWTQVLAALSVSLGSLVVGFV. Residues 414–440 lie on the Extracellular side of the membrane; it reads SAYTSPALVSMTDRNITSFEVTQDAGS. Asn428 carries N-linked (GlcNAc...) asparagine glycosylation. Residues 441 to 461 form a helical membrane-spanning segment; that stretch reads WVGGIMPLAGLAGGIAGGPLI. Topologically, residues 462-473 are cytoplasmic; the sequence is EYLGRRNTILAT. The chain crosses the membrane as a helical span at residues 474-494; it reads AVPFIVSSLLIACAVNVAMVL. The Extracellular segment spans residues 495–497; it reads CGR. Residues 498–518 traverse the membrane as a helical segment; the sequence is FLAGFCVGIASLSLPVYLGET. Residues 519-528 lie on the Cytoplasmic side of the membrane; sequence VQPEVRGTLG. A helical transmembrane segment spans residues 529-549; the sequence is LLPTAFGNIGILLCFVAGSFM. Asn550 carries an N-linked (GlcNAc...) asparagine glycan. Over 550-552 the chain is Extracellular; sequence NWS. The helical transmembrane segment at 553 to 573 threads the bilayer; sequence MLAFLGAALPVPFLILMFLIP. Residues 574–636 lie on the Cytoplasmic side of the membrane; sequence ETPRWFVGRG…ELFKRINLKP (63 aa). The chain crosses the membrane as a helical span at residues 637–657; that stretch reads LSISLGLMFFQQFSGINAVIF. Residues 658–673 are Extracellular-facing; that stretch reads YTVQIFKDAGSTIDSN. The chain crosses the membrane as a helical span at residues 674–694; that stretch reads LCTIIVGIVNFFATFMGILLI. Residues 695–700 lie on the Cytoplasmic side of the membrane; the sequence is DRLGRK. The helical transmembrane segment at 701–721 threads the bilayer; it reads ILLYISDIAMILTLSILGGFF. Topologically, residues 722 to 740 are extracellular; the sequence is YCKAHGPDVSHLGWLPLTC. A helical membrane pass occupies residues 741-761; the sequence is FVIYILGFSLGFGPIPWLMMG. Over 762-770 the chain is Cytoplasmic; it reads EILPAKIRG. The chain crosses the membrane as a helical span at residues 771–791; sequence PAASVVTAFNWFCTFVVTKTF. At 792 to 801 the chain is on the extracellular side; that stretch reads QDLTGAMGAH. A helical membrane pass occupies residues 802–822; that stretch reads GAFWLFGAICFVGLFFVIIYV. Topologically, residues 823 to 857 are cytoplasmic; that stretch reads PETQGKTLEDIERKMMGRVRRMSSVANIKPLSFNM. A phosphoserine mark is found at Ser845 and Ser846.

It belongs to the major facilitator superfamily. Sugar transporter (TC 2.A.1.1) family. Trehalose transporter subfamily.

It is found in the cell membrane. Functionally, low-capacity facilitative transporter for trehalose. Does not transport maltose, sucrose or lactose. Mediates the bidirectional transfer of trehalose. Responsible for the transport of trehalose synthesized in the fat body and the incorporation of trehalose into other tissues that require a carbon source, thereby regulating trehalose levels in the hemolymph. In Drosophila simulans (Fruit fly), this protein is Facilitated trehalose transporter Tret1-1.